The primary structure comprises 124 residues: Small ribosomal subunit protein uS12 (124 aa).

The residue at position 89 (aspartate 89) is a 3-methylthioaspartic acid.

This sequence belongs to the universal ribosomal protein uS12 family. In terms of assembly, part of the 30S ribosomal subunit. Contacts proteins S8 and S17. May interact with IF1 in the 30S initiation complex.

Functionally, with S4 and S5 plays an important role in translational accuracy. Interacts with and stabilizes bases of the 16S rRNA that are involved in tRNA selection in the A site and with the mRNA backbone. Located at the interface of the 30S and 50S subunits, it traverses the body of the 30S subunit contacting proteins on the other side and probably holding the rRNA structure together. The combined cluster of proteins S8, S12 and S17 appears to hold together the shoulder and platform of the 30S subunit. The sequence is that of Small ribosomal subunit protein uS12 from Aliivibrio fischeri (strain ATCC 700601 / ES114) (Vibrio fischeri).